A 174-amino-acid polypeptide reads, in one-letter code: Small ribosomal subunit protein uS5 (174 aa).

The 64-residue stretch at 19 to 82 (LREKMVAINR…DEARRKMVKV (64 aa)) folds into the S5 DRBM domain.

It belongs to the universal ribosomal protein uS5 family. As to quaternary structure, part of the 30S ribosomal subunit. Contacts proteins S4 and S8.

In terms of biological role, with S4 and S12 plays an important role in translational accuracy. Located at the back of the 30S subunit body where it stabilizes the conformation of the head with respect to the body. In Azoarcus sp. (strain BH72), this protein is Small ribosomal subunit protein uS5.